Consider the following 473-residue polypeptide: 3-isopropylmalate dehydratase large subunit (473 aa).

Positions 354, 414, and 417 each coordinate [4Fe-4S] cluster.

It belongs to the aconitase/IPM isomerase family. LeuC type 1 subfamily. As to quaternary structure, heterodimer of LeuC and LeuD. [4Fe-4S] cluster is required as a cofactor.

It carries out the reaction (2R,3S)-3-isopropylmalate = (2S)-2-isopropylmalate. It participates in amino-acid biosynthesis; L-leucine biosynthesis; L-leucine from 3-methyl-2-oxobutanoate: step 2/4. Functionally, catalyzes the isomerization between 2-isopropylmalate and 3-isopropylmalate, via the formation of 2-isopropylmaleate. This Mycobacterium bovis (strain ATCC BAA-935 / AF2122/97) protein is 3-isopropylmalate dehydratase large subunit.